The sequence spans 371 residues: Spermidine/putrescine import ATP-binding protein PotA (371 aa).

The region spanning 10–240 (VELRNVTKSY…PKNLFVARFI (231 aa)) is the ABC transporter domain. Position 42–49 (42–49 (GPSGCGKT)) interacts with ATP.

The protein belongs to the ABC transporter superfamily. Spermidine/putrescine importer (TC 3.A.1.11.1) family. In terms of assembly, the complex is composed of two ATP-binding proteins (PotA), two transmembrane proteins (PotB and PotC) and a solute-binding protein (PotD).

It is found in the cell inner membrane. It catalyses the reaction ATP + H2O + polyamine-[polyamine-binding protein]Side 1 = ADP + phosphate + polyamineSide 2 + [polyamine-binding protein]Side 1.. Its function is as follows. Part of the ABC transporter complex PotABCD involved in spermidine/putrescine import. Responsible for energy coupling to the transport system. This is Spermidine/putrescine import ATP-binding protein PotA from Haemophilus ducreyi (strain 35000HP / ATCC 700724).